Reading from the N-terminus, the 92-residue chain is Phospholemman (92 aa).

The signal sequence occupies residues 1-20 (MAPLHHILVLCVGFLTTATA). Residues 21 to 35 (EAPQEHDPFTYDYQS) are Extracellular-facing. Residues 36 to 56 (LRIGGLIIAGILFILGILIVL) form a helical membrane-spanning segment. Over 57-92 (SRRCRCKFNQQQRTGEPDEEEGTFRSSIRRLSTRRR) the chain is Cytoplasmic. Cys60 carries S-palmitoyl cysteine lipidation. Cys62 is subject to S-glutathionyl cysteine; alternate. Cys62 carries S-palmitoyl cysteine; alternate lipidation. Residues 65–92 (NQQQRTGEPDEEEGTFRSSIRRLSTRRR) form a disordered region. At Thr79 the chain carries Phosphothreonine. At Ser82 the chain carries Phosphoserine. Phosphoserine; by PKA and PKC is present on residues Ser83 and Ser88. A compositionally biased stretch (basic residues) spans 83–92 (SIRRLSTRRR). Thr89 is subject to Phosphothreonine; by PKC.

This sequence belongs to the FXYD family. Homotetramer. Monomer. Regulatory subunit of the sodium/potassium-transporting ATPase (NKA) which is composed of a catalytic alpha subunit, a non-catalytic beta subunit and an additional regulatory subunit. The monomeric form associates with NKA while the oligomeric form does not. Interacts with the catalytic alpha-1 subunit ATP1A1. Also interacts with the catalytic alpha-2 and alpha-3 subunits ATP1A2 and ATP1A3. Very little interaction with the alpha subunits ATP1A1, ATP1A2 or ATP1A3 when phosphorylated at Ser-83. Interacts with non-catalytic beta-1 subunit ATP1B1. Oxidative stress decreases interaction with ATP1A1 but increases interaction with ATP1B1. Major plasma membrane substrate for cAMP-dependent protein kinase (PKA) and protein kinase C (PKC) in several different tissues. Phosphorylated in response to insulin and adrenergic stimulation. Phosphorylation at Ser-88 stimulates sodium/potassium-transporting ATPase activity while the unphosphorylated form inhibits sodium/potassium-transporting ATPase activity. Phosphorylation increases tetramerization, decreases binding to ATP1A1 and reduces inhibition of ATP1A1 activity. Phosphorylation at Ser-83 leads to greatly reduced interaction with ATP1A1, ATP1A2 and ATP1A3. May be phosphorylated by DMPK. Post-translationally, palmitoylation increases half-life and stability and is enhanced upon phosphorylation at Ser-88 by PKA. In terms of tissue distribution, present in heart, esophagus, stomach, aorta, skeletal muscle, smooth muscle, and liver but absent from brain and kidney.

The protein localises to the cell membrane. It is found in the sarcolemma. The protein resides in the apical cell membrane. Its subcellular location is the membrane. It localises to the caveola. The protein localises to the T-tubule. In terms of biological role, associates with and regulates the activity of the sodium/potassium-transporting ATPase (NKA) which transports Na(+) out of the cell and K(+) into the cell. Inhibits NKA activity in its unphosphorylated state and stimulates activity when phosphorylated. Reduces glutathionylation of the NKA beta-1 subunit ATP1B1, thus reversing glutathionylation-mediated inhibition of ATP1B1. Contributes to female sexual development by maintaining the excitability of neurons which secrete gonadotropin-releasing hormone. The chain is Phospholemman from Canis lupus familiaris (Dog).